Reading from the N-terminus, the 83-residue chain is Small integral membrane protein 22 (83 aa).

Residues 32 to 52 (VAFIVFLTFMGTVLLLLLLVV) form a helical membrane-spanning segment. The interval 60-83 (SPGPRRESPRKERPKGVDNLALEP) is disordered. Over residues 63–75 (PRRESPRKERPKG) the composition is skewed to basic and acidic residues.

In terms of assembly, interacts with CANX and DDOST. Interacts with SQLE; this interaction modulates lipid droplet formation.

The protein resides in the membrane. It is found in the late endosome. In terms of biological role, may modulate lipid droplet formation throught interaction with SQLE. The polypeptide is Small integral membrane protein 22 (Homo sapiens (Human)).